The following is a 274-amino-acid chain: Triosephosphate isomerase (274 aa).

Residue 31-33 (NWK) participates in substrate binding. Catalysis depends on H118, which acts as the Electrophile. E188 acts as the Proton acceptor in catalysis. Substrate-binding positions include G194, S234, and 255 to 256 (GG).

This sequence belongs to the triosephosphate isomerase family. In terms of assembly, homodimer.

Its subcellular location is the cytoplasm. It catalyses the reaction D-glyceraldehyde 3-phosphate = dihydroxyacetone phosphate. It participates in carbohydrate biosynthesis; gluconeogenesis. It functions in the pathway carbohydrate degradation; glycolysis; D-glyceraldehyde 3-phosphate from glycerone phosphate: step 1/1. Its function is as follows. Involved in the gluconeogenesis. Catalyzes stereospecifically the conversion of dihydroxyacetone phosphate (DHAP) to D-glyceraldehyde-3-phosphate (G3P). This Chlamydia trachomatis serovar A (strain ATCC VR-571B / DSM 19440 / HAR-13) protein is Triosephosphate isomerase.